Reading from the N-terminus, the 380-residue chain is Glucose-1-phosphate adenylyltransferase (380 aa).

Alpha-D-glucose 1-phosphate-binding positions include Gly-164, 179–180 (EK), and Ser-190.

It belongs to the bacterial/plant glucose-1-phosphate adenylyltransferase family. In terms of assembly, homotetramer.

It catalyses the reaction alpha-D-glucose 1-phosphate + ATP + H(+) = ADP-alpha-D-glucose + diphosphate. It participates in glycan biosynthesis; glycogen biosynthesis. Involved in the biosynthesis of ADP-glucose, a building block required for the elongation reactions to produce glycogen. Catalyzes the reaction between ATP and alpha-D-glucose 1-phosphate (G1P) to produce pyrophosphate and ADP-Glc. The polypeptide is Glucose-1-phosphate adenylyltransferase (Streptococcus pneumoniae (strain 70585)).